Reading from the N-terminus, the 345-residue chain is S-adenosylmethionine:tRNA ribosyltransferase-isomerase (345 aa).

This sequence belongs to the QueA family. As to quaternary structure, monomer.

It localises to the cytoplasm. It carries out the reaction 7-aminomethyl-7-carbaguanosine(34) in tRNA + S-adenosyl-L-methionine = epoxyqueuosine(34) in tRNA + adenine + L-methionine + 2 H(+). Its pathway is tRNA modification; tRNA-queuosine biosynthesis. Functionally, transfers and isomerizes the ribose moiety from AdoMet to the 7-aminomethyl group of 7-deazaguanine (preQ1-tRNA) to give epoxyqueuosine (oQ-tRNA). This Alkalilimnicola ehrlichii (strain ATCC BAA-1101 / DSM 17681 / MLHE-1) protein is S-adenosylmethionine:tRNA ribosyltransferase-isomerase.